The sequence spans 426 residues: Lipid droplet localized protein (426 aa).

The helical transmembrane segment at 278-298 (FYGYLIGLWIMFLSIFVKYPF) threads the bilayer.

This sequence belongs to the saccharopine dehydrogenase family.

Its subcellular location is the membrane. The protein localises to the lipid droplet. This chain is Lipid droplet localized protein, found in Caenorhabditis elegans.